The chain runs to 318 residues: Pseudouridine-5'-phosphate glycosidase 1 (318 aa).

E29 acts as the Proton donor in catalysis. Substrate-binding residues include K90 and V110. Residue D142 coordinates Mn(2+). 144 to 146 (SAD) is a binding site for substrate. The active-site Nucleophile is the K163.

The protein belongs to the pseudouridine-5'-phosphate glycosidase family. As to quaternary structure, homotrimer. The cofactor is Mn(2+).

It carries out the reaction D-ribose 5-phosphate + uracil = psi-UMP + H2O. Functionally, catalyzes the reversible cleavage of pseudouridine 5'-phosphate (PsiMP) to ribose 5-phosphate and uracil. Functions biologically in the cleavage direction, as part of a pseudouridine degradation pathway. The chain is Pseudouridine-5'-phosphate glycosidase 1 from Photorhabdus laumondii subsp. laumondii (strain DSM 15139 / CIP 105565 / TT01) (Photorhabdus luminescens subsp. laumondii).